The primary structure comprises 399 residues: Tyrosine--tRNA ligase 2 (399 aa).

Positions 41–50 (PTAPDLHLGH) match the 'HIGH' region motif. The short motif at 225 to 229 (KMSKS) is the 'KMSKS' region element. K228 provides a ligand contact to ATP. The region spanning 336–398 (ILIANLLKEA…GKRKFANITV (63 aa)) is the S4 RNA-binding domain.

It belongs to the class-I aminoacyl-tRNA synthetase family. TyrS type 2 subfamily. As to quaternary structure, homodimer.

Its subcellular location is the cytoplasm. The enzyme catalyses tRNA(Tyr) + L-tyrosine + ATP = L-tyrosyl-tRNA(Tyr) + AMP + diphosphate + H(+). In terms of biological role, catalyzes the attachment of tyrosine to tRNA(Tyr) in a two-step reaction: tyrosine is first activated by ATP to form Tyr-AMP and then transferred to the acceptor end of tRNA(Tyr). This is Tyrosine--tRNA ligase 2 from Pseudoalteromonas translucida (strain TAC 125).